The chain runs to 209 residues: Ribosomal RNA large subunit methyltransferase E (209 aa).

Residues Gly63, Trp65, Asp83, Asp99, and Asp124 each contribute to the S-adenosyl-L-methionine site. Lys164 serves as the catalytic Proton acceptor.

It belongs to the class I-like SAM-binding methyltransferase superfamily. RNA methyltransferase RlmE family.

The protein localises to the cytoplasm. The enzyme catalyses uridine(2552) in 23S rRNA + S-adenosyl-L-methionine = 2'-O-methyluridine(2552) in 23S rRNA + S-adenosyl-L-homocysteine + H(+). Specifically methylates the uridine in position 2552 of 23S rRNA at the 2'-O position of the ribose in the fully assembled 50S ribosomal subunit. This chain is Ribosomal RNA large subunit methyltransferase E, found in Shewanella halifaxensis (strain HAW-EB4).